The sequence spans 350 residues: Protein-glutamate methylesterase/protein-glutamine glutaminase 1 (350 aa).

Residues 3–121 (KVLIVEDSPV…RDYDIRARDL (119 aa)) enclose the Response regulatory domain. Position 54 is a 4-aspartylphosphate (Asp54). The 195-residue stretch at 148–342 (PASGEPDIGK…PPEKIARVLV (195 aa)) folds into the CheB-type methylesterase domain. Residues Ser170, His197, and Asp290 contribute to the active site.

This sequence belongs to the CheB family. Post-translationally, phosphorylated by CheA. Phosphorylation of the N-terminal regulatory domain activates the methylesterase activity.

The protein resides in the cytoplasm. It carries out the reaction [protein]-L-glutamate 5-O-methyl ester + H2O = L-glutamyl-[protein] + methanol + H(+). It catalyses the reaction L-glutaminyl-[protein] + H2O = L-glutamyl-[protein] + NH4(+). Functionally, involved in chemotaxis. Part of a chemotaxis signal transduction system that modulates chemotaxis in response to various stimuli. Catalyzes the demethylation of specific methylglutamate residues introduced into the chemoreceptors (methyl-accepting chemotaxis proteins or MCP) by CheR. Also mediates the irreversible deamidation of specific glutamine residues to glutamic acid. This is Protein-glutamate methylesterase/protein-glutamine glutaminase 1 from Syntrophus aciditrophicus (strain SB).